The chain runs to 89 residues: uncharacterized protein (89 aa).

The N-terminal stretch at 1 to 19 (MQLTKTQFVRCVFLLLANS) is a signal peptide.

This is an uncharacterized protein from Sulfolobus islandicus filamentous virus (isolate Iceland/Hveragerdi) (SIFV).